We begin with the raw amino-acid sequence, 385 residues long: 8-amino-7-oxononanoate synthase (385 aa).

A substrate-binding site is contributed by Arg21. Position 108 to 109 (Gly108 to Phe109) interacts with pyridoxal 5'-phosphate. His133 provides a ligand contact to substrate. Pyridoxal 5'-phosphate-binding residues include Ser179, His207, and Thr233. Lys236 is modified (N6-(pyridoxal phosphate)lysine). Residue Thr352 participates in substrate binding.

This sequence belongs to the class-II pyridoxal-phosphate-dependent aminotransferase family. BioF subfamily. As to quaternary structure, homodimer. Pyridoxal 5'-phosphate serves as cofactor.

The enzyme catalyses 6-carboxyhexanoyl-[ACP] + L-alanine + H(+) = (8S)-8-amino-7-oxononanoate + holo-[ACP] + CO2. It functions in the pathway cofactor biosynthesis; biotin biosynthesis. In terms of biological role, catalyzes the decarboxylative condensation of pimeloyl-[acyl-carrier protein] and L-alanine to produce 8-amino-7-oxononanoate (AON), [acyl-carrier protein], and carbon dioxide. The polypeptide is 8-amino-7-oxononanoate synthase (Salmonella choleraesuis (strain SC-B67)).